A 548-amino-acid polypeptide reads, in one-letter code: uncharacterized protein (548 aa).

Short-chain dehydrogenase/reductase regions lie at residues 1 to 250 (MDDR…WMSV) and 271 to 548 (PVED…LLSP). 12-37 (IVVTGAAGGIGRALVDIFAANGDVVV) contributes to the NADP(+) binding site. Ser-141 contacts substrate. Tyr-154 serves as the catalytic Proton acceptor. 280–304 (VIVMGGATGVGAAIARRFAENGDTV) is an NADP(+) binding site. Tyr-420 functions as the Proton acceptor in the catalytic mechanism.

This sequence belongs to the short-chain dehydrogenases/reductases (SDR) family.

This is an uncharacterized protein from Sinorhizobium fredii (strain NBRC 101917 / NGR234).